Here is a 149-residue protein sequence, read N- to C-terminus: L-alanine exporter AlaE (149 aa).

4 helical membrane passes run 16 to 36 (FAMVVYCSVVNMCIEVFLSGM), 46 to 66 (LVAIPVNILIAWPYGMYRDLF), 85 to 105 (ILAYVTFQSPVYVAILLVVGA), and 112 to 132 (AAVSSNIVVSMLMGAVYGYFL).

Belongs to the AlaE exporter family.

The protein resides in the cell inner membrane. Its function is as follows. Exports L-alanine. In Shigella flexneri, this protein is L-alanine exporter AlaE.